The primary structure comprises 66 residues: Cold shock protein 1 (66 aa).

Residues 4 to 63 (GTVKWFNADKGYGFITGEDGNDVFVHFSAIQTDGFKTLEEGQKVTFDEESSDRGPQAANV) enclose the CSD domain. Positions 47 to 66 (VTFDEESSDRGPQAANVVPQ) are disordered.

Its subcellular location is the cytoplasm. This Lactiplantibacillus plantarum (strain ATCC BAA-793 / NCIMB 8826 / WCFS1) (Lactobacillus plantarum) protein is Cold shock protein 1 (csp).